Reading from the N-terminus, the 182-residue chain is Succinate dehydrogenase cytochrome b560 subunit, mitochondrial (182 aa).

A helical transmembrane segment spans residues 65–94; it reads LTWMLSGFHRISGCVMAGTLLVGGIGFAVL. Topologically, residues 95 to 114 are mitochondrial intermembrane; it reads PFDFTAFVDFIRSWNLPCAV. The chain crosses the membrane as a helical span at residues 115 to 139; sequence TAVFKYIIAFPIIFHTLNGIRFLGF. His129 provides a ligand contact to heme. Over 140–147 the chain is Mitochondrial matrix; that stretch reads DLAKGVNN. The helical transmembrane segment at 148–169 threads the bilayer; sequence VGQIYKSGYLVSGLSAILALAI. Residues 170–172 are Mitochondrial intermembrane-facing; the sequence is VFN.

This sequence belongs to the cytochrome b560 family. Component of complex II composed of four subunits: a flavoprotein (FP), iron-sulfur protein (IP), and a cytochrome b560 composed of two integral membrane proteins. It depends on heme as a cofactor.

It localises to the mitochondrion inner membrane. Its pathway is carbohydrate metabolism; tricarboxylic acid cycle. In terms of biological role, membrane-anchoring subunit of succinate dehydrogenase (SDH) that is involved in complex II of the mitochondrial electron transport chain and is responsible for transferring electrons from succinate to ubiquinone (coenzyme Q). Mediates resistance to enteropathogenic E.coli infection. In Caenorhabditis elegans, this protein is Succinate dehydrogenase cytochrome b560 subunit, mitochondrial (mev-1).